Reading from the N-terminus, the 101-residue chain is Apolipoprotein C-II (101 aa).

The signal sequence occupies residues 1–22 (MGARHLLALLLVLLVLGFEVQG). The tract at residues 66–74 (TMDEKIRDM) is lipid binding. The interval 78–101 (STAAVSTYVGIFTDQLLSLLKGED) is lipoprotein lipase cofactor.

Belongs to the apolipoprotein C2 family. Proapolipoprotein C-II is synthesized as a sialic acid containing glycoprotein which is subsequently desialylated prior to its proteolytic processing. In terms of processing, proapolipoprotein C-II, the major form found in plasma undergoes proteolytic cleavage of its N-terminal hexapeptide to generate apolipoprotein C-II, which occurs as the minor form in plasma.

It is found in the secreted. Functionally, component of chylomicrons, very low-density lipoproteins (VLDL), low-density lipoproteins (LDL), and high-density lipoproteins (HDL) in plasma. Plays an important role in lipoprotein metabolism as an activator of lipoprotein lipase. Both proapolipoprotein C-II and apolipoprotein C-II can activate lipoprotein lipase. The polypeptide is Apolipoprotein C-II (APOC2) (Tapirus terrestris (Lowland tapir)).